Here is a 489-residue protein sequence, read N- to C-terminus: UBX domain-containing protein 7 (489 aa).

Position 2 is an N-acetylalanine (alanine 2). A UBA domain is found at 2–54 (AAHGGSAASSALKGLIQQFTTITGASESVGKHMLEACNNNLEMAVTMFLDGGG). Residues 56 to 77 (AEEPSTSSASVSTVRPHTEEEV) form a disordered region. Positions 59–70 (PSTSSASVSTVR) are enriched in polar residues. Lysine 84 is covalently cross-linked (Glycyl lysine isopeptide (Lys-Gly) (interchain with G-Cter in SUMO2)). Residue lysine 99 forms a Glycyl lysine isopeptide (Lys-Gly) (interchain with G-Cter in ubiquitin) linkage. A Glycyl lysine isopeptide (Lys-Gly) (interchain with G-Cter in SUMO2) cross-link involves residue lysine 134. Serine 278, serine 280, serine 285, and serine 288 each carry phosphoserine. Residues 285–304 (SEDSQLEAAIRASLQETHFD) form the UIM domain. Positions 300–309 (ETHFDSTQTK) are enriched in polar residues. The tract at residues 300–384 (ETHFDSTQTK…PGTATNHQGL (85 aa)) is disordered. Position 306 is a phosphothreonine (threonine 306). Positions 352–366 (HKDLGHRKEENRRPL) are enriched in basic and acidic residues. The UBX domain maps to 408–485 (VNGPKAQLML…GLCPQETVFV (78 aa)).

As to quaternary structure, interacts with neddylated CUL2, ubiquitinated HIF1A, and VCP/p97.

It localises to the nucleus. Its function is as follows. Ubiquitin-binding adapter that links a subset of NEDD8-associated cullin ring ligases (CRLs) to the segregase VCP/p97, to regulate turnover of their ubiquitination substrates. In Homo sapiens (Human), this protein is UBX domain-containing protein 7 (UBXN7).